Consider the following 210-residue polypeptide: Nucleoside triphosphate pyrophosphatase (210 aa).

Residue D79 is the Proton acceptor of the active site.

The protein belongs to the Maf family. The cofactor is a divalent metal cation.

The protein resides in the cytoplasm. The enzyme catalyses a ribonucleoside 5'-triphosphate + H2O = a ribonucleoside 5'-phosphate + diphosphate + H(+). The catalysed reaction is a 2'-deoxyribonucleoside 5'-triphosphate + H2O = a 2'-deoxyribonucleoside 5'-phosphate + diphosphate + H(+). In terms of biological role, nucleoside triphosphate pyrophosphatase. May have a dual role in cell division arrest and in preventing the incorporation of modified nucleotides into cellular nucleic acids. This is Nucleoside triphosphate pyrophosphatase from Mycolicibacterium paratuberculosis (strain ATCC BAA-968 / K-10) (Mycobacterium paratuberculosis).